A 277-amino-acid polypeptide reads, in one-letter code: Co-chaperone protein DjlA (277 aa).

Topologically, residues 1-6 (MRYWGK) are periplasmic. Residues 7-31 (LLGLVLGVMYAPGVVGALLGLLVGH) form a helical membrane-spanning segment. Residues 32–277 (MVDRALGAKR…DLIKREKGFK (246 aa)) lie on the Cytoplasmic side of the membrane. Positions 211 to 277 (DACKVLGVNS…DLIKREKGFK (67 aa)) constitute a J domain.

In terms of assembly, homodimer.

Its subcellular location is the cell inner membrane. Regulatory DnaK co-chaperone. Direct interaction between DnaK and DjlA is needed for the induction of the wcaABCDE operon, involved in the synthesis of a colanic acid polysaccharide capsule, possibly through activation of the RcsB/RcsC phosphotransfer signaling pathway. The colanic acid capsule may help the bacterium survive conditions outside the host. The sequence is that of Co-chaperone protein DjlA from Yersinia pseudotuberculosis serotype I (strain IP32953).